A 1202-amino-acid chain; its full sequence is Protein HASTY 1 (1202 aa).

Met1 is subject to N-acetylmethionine.

It belongs to the exportin family. Interacts with RAN1. In terms of tissue distribution, expressed in roots, leaves and floral buds.

The protein resides in the nucleus. In terms of biological role, nucleocytoplasmic transporter involved in the nuclear export of microRNAs (miRNAs). Required for several miRNAs accumulation. Specifically required for miR156 accumulation which targets SPL3, SPL4 and SPL5 transcription factors. Involved in plant development through its role in miRNAs processing. Required for vegetative phase change and vegetative to reproductive phase transition. Functionally dependent on RAN1 binding. Does not seem to be involved in small interfering RNAs (siRNAs) processing. The chain is Protein HASTY 1 (HST1) from Arabidopsis thaliana (Mouse-ear cress).